The primary structure comprises 465 residues: Juvenile hormone epoxide hydrolase 2 (465 aa).

Residues 7 to 27 form a helical membrane-spanning segment; it reads ILWIAIVIGLGVLYYEITKEF. Aspartate 224 acts as the Nucleophile in catalysis. The Proton donor role is filled by tyrosine 370. Histidine 427 acts as the Proton acceptor in catalysis.

The protein belongs to the peptidase S33 family.

The protein resides in the microsome membrane. It is found in the endoplasmic reticulum membrane. The catalysed reaction is cis-stilbene oxide + H2O = (1R,2R)-hydrobenzoin. The enzyme catalyses 1-(4-methoxyphenyl)-N-methyl-N-[(3-methyloxetan-3-yl)methyl]methanamine + H2O = 2-{[(4-methoxybenzyl)(methyl)amino]methyl}-2-methylpropane-1,3-diol. Catalyzes juvenile hormone hydrolysis. This Ctenocephalides felis (Cat flea) protein is Juvenile hormone epoxide hydrolase 2.